Here is a 248-residue protein sequence, read N- to C-terminus: Type II methyltransferase M.AquIA (248 aa).

An SAM-dependent MTase C5-type domain is found at 3–248 (KKLISLFSGA…IKDRIKNHGY (246 aa)). Cys-82 is a catalytic residue.

This sequence belongs to the class I-like SAM-binding methyltransferase superfamily. C5-methyltransferase family. In terms of assembly, heterodimer of an alpha and a beta subunit.

It carries out the reaction a 2'-deoxycytidine in DNA + S-adenosyl-L-methionine = a 5-methyl-2'-deoxycytidine in DNA + S-adenosyl-L-homocysteine + H(+). Functionally, a methylase, recognizes the double-stranded sequence 5'-CYCGRG-3', methylates C-1 on both strands, and protects the DNA from cleavage by the AquI endonuclease. This chain is Type II methyltransferase M.AquIA (aquIMA), found in Picosynechococcus sp. (strain ATCC 27264 / PCC 7002 / PR-6) (Agmenellum quadruplicatum).